The chain runs to 314 residues: Phospholipid phosphatase-related protein type 5 (314 aa).

6 helical membrane-spanning segments follow: residues Phe-5–Ala-25, Ile-61–Gly-81, Phe-120–Val-140, Ala-194–Ala-214, Val-223–Tyr-243, and Val-250–Asn-270.

The protein belongs to the PA-phosphatase related phosphoesterase family.

It is found in the cell membrane. In terms of biological role, induces filopodia formation and promotes neurite growth. This chain is Phospholipid phosphatase-related protein type 5, found in Xenopus laevis (African clawed frog).